The chain runs to 483 residues: Altronate oxidoreductase (483 aa).

Residue 18-29 (IIQFGEGNFLRA) coordinates NAD(+).

Belongs to the mannitol dehydrogenase family. UxaB subfamily.

It catalyses the reaction D-altronate + NAD(+) = keto-D-tagaturonate + NADH + H(+). It functions in the pathway carbohydrate metabolism; pentose and glucuronate interconversion. In Shigella flexneri, this protein is Altronate oxidoreductase (uxaB).